We begin with the raw amino-acid sequence, 1171 residues long: ATP-dependent helicase/deoxyribonuclease subunit B (1171 aa).

In terms of domain architecture, UvrD-like helicase ATP-binding spans 1-390; it reads MSLRFVIGRA…HPLVECIRSA (390 aa). An ATP-binding site is contributed by 8–15; the sequence is GRAGSGKS. The 307-residue stretch at 281-587 folds into the UvrD-like helicase C-terminal domain; sequence MEQPRFHSPA…QFANIPPSLD (307 aa). Residues Cys-805, Cys-1129, Cys-1132, and Cys-1138 each contribute to the [4Fe-4S] cluster site.

It belongs to the helicase family. AddB/RexB type 1 subfamily. In terms of assembly, heterodimer of AddA and AddB. Requires Mg(2+) as cofactor. It depends on [4Fe-4S] cluster as a cofactor.

Functionally, the heterodimer acts as both an ATP-dependent DNA helicase and an ATP-dependent, dual-direction single-stranded exonuclease. Recognizes the chi site generating a DNA molecule suitable for the initiation of homologous recombination. The AddB subunit has 5' -&gt; 3' nuclease activity but not helicase activity. This Bacillus cereus (strain ATCC 14579 / DSM 31 / CCUG 7414 / JCM 2152 / NBRC 15305 / NCIMB 9373 / NCTC 2599 / NRRL B-3711) protein is ATP-dependent helicase/deoxyribonuclease subunit B.